The sequence spans 421 residues: CinA-like protein (421 aa).

This sequence belongs to the CinA family.

The sequence is that of CinA-like protein from Mycobacterium sp. (strain JLS).